A 375-amino-acid chain; its full sequence is Trichodiene synthase (375 aa).

Belongs to the trichodiene synthase family.

It catalyses the reaction (2E,6E)-farnesyl diphosphate = trichodiene + diphosphate. It participates in sesquiterpene biosynthesis; trichothecene biosynthesis. Functionally, TS is a member of the terpene cyclase group of enzymes. It catalyzes the isomerization and cyclization of farnesyl pyro-phosphate to form trichodiene, the first cyclic intermediate in the biosynthetic pathway for trichothecenes. It serves to branch trichothecene biosynthesis from the isoprenoid pathway. The protein is Trichodiene synthase (TRI5) of Fusarium austroamericanum.